The sequence spans 509 residues: Cytochrome P450 4A10 (509 aa).

The next 2 helical transmembrane spans lie at 15–35 (LSGF…VKAV) and 121–141 (LLAP…WFQH). Residue glutamate 320 participates in heme binding. Residue serine 439 is modified to Phosphoserine. Residue cysteine 456 coordinates heme.

This sequence belongs to the cytochrome P450 family. Heme is required as a cofactor. As to expression, highly expressed in the kidneys of both genders.

The protein localises to the endoplasmic reticulum membrane. It is found in the microsome membrane. The catalysed reaction is an omega-methyl-long-chain fatty acid + reduced [NADPH--hemoprotein reductase] + O2 = an omega-hydroxy-long-chain fatty acid + oxidized [NADPH--hemoprotein reductase] + H2O + H(+). It catalyses the reaction dodecanoate + reduced [NADPH--hemoprotein reductase] + O2 = 12-hydroxydodecanoate + oxidized [NADPH--hemoprotein reductase] + H2O + H(+). It carries out the reaction dodecanoate + reduced [NADPH--hemoprotein reductase] + O2 = 11-hydroxydodecanoate + oxidized [NADPH--hemoprotein reductase] + H2O + H(+). The enzyme catalyses tetradecanoate + reduced [NADPH--hemoprotein reductase] + O2 = 14-hydroxytetradecanoate + oxidized [NADPH--hemoprotein reductase] + H2O + H(+). The catalysed reaction is hexadecanoate + reduced [NADPH--hemoprotein reductase] + O2 = 16-hydroxyhexadecanoate + oxidized [NADPH--hemoprotein reductase] + H2O + H(+). It catalyses the reaction (9Z)-octadecenoate + reduced [NADPH--hemoprotein reductase] + O2 = 18-hydroxy-(9Z)-octadecenoate + oxidized [NADPH--hemoprotein reductase] + H2O + H(+). It carries out the reaction (9Z,12Z)-octadecadienoate + reduced [NADPH--hemoprotein reductase] + O2 = 18-hydroxy-(9Z,12Z)-octadecadienoate + oxidized [NADPH--hemoprotein reductase] + H2O + H(+). The enzyme catalyses (9Z,12Z)-octadecadienoate + reduced [NADPH--hemoprotein reductase] + O2 = 17-hydroxy-(9Z,12Z)-octadecadienoate + oxidized [NADPH--hemoprotein reductase] + H2O + H(+). The catalysed reaction is (5Z,8Z,11Z,14Z)-eicosatetraenoate + reduced [NADPH--hemoprotein reductase] + O2 = 20-hydroxy-(5Z,8Z,11Z,14Z)-eicosatetraenoate + oxidized [NADPH--hemoprotein reductase] + H2O + H(+). It catalyses the reaction 8,9-epoxy-(5Z,11Z,14Z)-eicosatrienoate + reduced [NADPH--hemoprotein reductase] + O2 = 20-hydroxy-8,9-epoxy-(5Z,11Z,14Z)-eicosatrienoate + oxidized [NADPH--hemoprotein reductase] + H2O + H(+). Its function is as follows. A cytochrome P450 monooxygenase involved in the metabolism of fatty acids. Catalyzes predominantly the oxidation of the terminal carbon (omega-oxidation) of long-chain fatty acids. Acts as a major omega-hydroxylase for dodecanoic (lauric) acid in liver. In kidney, may play an important role in omega-hydroxylation of (5Z,8Z,11Z,14Z)-eicosatetraenoic acid (arachidonate) to 20-hydroxyeicosatetraenoic acid (20-HETE), a signaling molecule acting both as vasoconstrictive and natriuretic with overall effect on arterial blood pressure. Also participates in the formation of anti-inflammatory hydroxyepoxyeicosatrienoic acids (HEETs) in kidney by converting 8,9-epoxyeicosatrienoic acid (EET) to 20,8,9-HEET, an activator of PPARA. Displays substantially lower fatty acid omega-1 hydroxylase activity. Mechanistically, uses molecular oxygen inserting one oxygen atom into a substrate, and reducing the second into a water molecule, with two electrons provided by NADPH via cytochrome P450 reductase (CPR; NADPH-ferrihemoprotein reductase). The chain is Cytochrome P450 4A10 from Mus musculus (Mouse).